The sequence spans 471 residues: Eukaryotic translation initiation factor 3 subunit L (471 aa).

In terms of domain architecture, PCI spans D252–L446.

This sequence belongs to the eIF-3 subunit L family.

It is found in the cytoplasm. In terms of biological role, component of the eukaryotic translation initiation factor 3 (eIF-3) complex, which is involved in protein synthesis of a specialized repertoire of mRNAs and, together with other initiation factors, stimulates binding of mRNA and methionyl-tRNAi to the 40S ribosome. The eIF-3 complex specifically targets and initiates translation of a subset of mRNAs involved in cell proliferation. In Pyricularia oryzae (strain Y34) (Rice blast fungus), this protein is Eukaryotic translation initiation factor 3 subunit L.